A 116-amino-acid polypeptide reads, in one-letter code: Large ribosomal subunit protein bL20 (116 aa).

The protein belongs to the bacterial ribosomal protein bL20 family.

In terms of biological role, binds directly to 23S ribosomal RNA and is necessary for the in vitro assembly process of the 50S ribosomal subunit. It is not involved in the protein synthesizing functions of that subunit. The protein is Large ribosomal subunit protein bL20 of Thermosynechococcus vestitus (strain NIES-2133 / IAM M-273 / BP-1).